The following is a 933-amino-acid chain: MSSMILPTEPEALPNRADDSAALEAETRLRNDIRLLGRILGDTVRDQEGAAVFDLVEGIRQTSIRFHRDDDTTARRELEAILDGMSASDTVKIVRAFSYFSHLANIAEDQNNIRQMRVGSTAGSAPRAGMLAKTLAHARADGIGAAELRDFFKTALVSPVLTAHPTEVRRKSTMDREMQIAALLDERERVQLTPEEWEQNEEQLRRAVVTLWKTNLLRRTKLTVLDEVTNGLSFYDYTFLREVPRLHCALEDQLGGGEGAEADAELASFLRMGSWIGGDRDGNPFVTAEVLHGTLQLQSARVLRFYLDELHELGSELSLASHLVAISDEVRALAERSPDHSPHRRHEPYRLAVSGIYARLAATAAKLRIDSIRAPVGEAEAYASVHDFKADLDAIHRSLVAHNAGVIARGRLRQLRRAADCFGFHLASLDMRQNSAVHERTIAELMNAAHPASAYLEIGEDARIALLTAELRSARPLTSIFVKYSDETVGELAVLHEAAQAHATYGAAAIPQCIISMTKGVSDLLEVAVLLKEVGLIDPSGRSAINIVPLFETIEDLQASSAIMDRLLGIPEYRRLVDSRGGVQEVMLGYSDSNKDGGFVTSGWELYKAEIGLIEIFEHHGIRLRLFHGRGGSVGRGGGPSYDAIVAQPGGAVNGQIRITEQGEIITSKYSNREVGRNNLEILTAATLEASLLQPKRVAPQRDYLDAMEQLSAMAFKAYRGLVYETDGFVDYFWASTVITEISTLNIGSRPASRKKTRAIEDLRAIPWVFSWAQCRLMLPGWYGFGSAVEAWIAAHPDKGVPFLRSMYQEWPFFRTLLSNMDMVLSKSSLGIASRYAELVPDETLRREIFGRIRAEWHASVDGLLAIMGHDKLLQGNPLLDRSIRHRFPYLDPLNHVQVQLLREHRTHDPDEQILRGIQLTINGISAGLRNSG.

Catalysis depends on residues His-164 and Lys-595.

It belongs to the PEPCase type 1 family. The cofactor is Mg(2+).

The enzyme catalyses oxaloacetate + phosphate = phosphoenolpyruvate + hydrogencarbonate. Forms oxaloacetate, a four-carbon dicarboxylic acid source for the tricarboxylic acid cycle. This is Phosphoenolpyruvate carboxylase from Rhodopseudomonas palustris (strain HaA2).